We begin with the raw amino-acid sequence, 444 residues long: Tol-Pal system protein TolB (444 aa).

The N-terminal stretch at 1 to 18 (MRNIIYFILLLFSCTGYA) is a signal peptide.

This sequence belongs to the TolB family. The Tol-Pal system is composed of five core proteins: the inner membrane proteins TolA, TolQ and TolR, the periplasmic protein TolB and the outer membrane protein Pal. They form a network linking the inner and outer membranes and the peptidoglycan layer.

It is found in the periplasm. Part of the Tol-Pal system, which plays a role in outer membrane invagination during cell division and is important for maintaining outer membrane integrity. The sequence is that of Tol-Pal system protein TolB from Rickettsia canadensis (strain McKiel).